Reading from the N-terminus, the 448-residue chain is Adenylosuccinate synthetase (448 aa).

GTP-binding positions include 22–28 (GDEGKGK) and 50–52 (GHT). The active-site Proton acceptor is Asp23. Asp23 and Gly50 together coordinate Mg(2+). IMP contacts are provided by residues 23–26 (DEGK), 48–51 (NAGH), Thr139, Arg153, Gln234, Thr249, and Arg321. His51 functions as the Proton donor in the catalytic mechanism. Residue 317–323 (SVTGRPR) participates in substrate binding. Residues Arg323, 349–351 (KLD), and 431–433 (STG) each bind GTP.

The protein belongs to the adenylosuccinate synthetase family. As to quaternary structure, homodimer. It depends on Mg(2+) as a cofactor.

The protein resides in the cytoplasm. The catalysed reaction is IMP + L-aspartate + GTP = N(6)-(1,2-dicarboxyethyl)-AMP + GDP + phosphate + 2 H(+). The protein operates within purine metabolism; AMP biosynthesis via de novo pathway; AMP from IMP: step 1/2. Functionally, plays an important role in the de novo pathway of purine nucleotide biosynthesis. Catalyzes the first committed step in the biosynthesis of AMP from IMP. The chain is Adenylosuccinate synthetase from Burkholderia mallei (strain NCTC 10247).